A 418-amino-acid chain; its full sequence is NADH-quinone oxidoreductase subunit H (418 aa).

The next 9 helical transmembrane spans lie at 15–35, 83–103, 123–143, 164–184, 197–217, 262–282, 287–307, 321–341, and 349–369; these read LVLG…LVAI, FVYF…FAFI, LPVA…GIVL, VISY…YAGS, VWFV…MVGE, LATA…MWAG, WWPV…YFWL, GLGW…AAVI, and YAHW…ALVL. The segment at 394-418 is disordered; sequence AAHRAGFHPGIPDTAAAGESAGGRE.

The protein belongs to the complex I subunit 1 family. In terms of assembly, NDH-1 is composed of 14 different subunits. Subunits NuoA, H, J, K, L, M, N constitute the membrane sector of the complex.

The protein resides in the cell membrane. The enzyme catalyses a quinone + NADH + 5 H(+)(in) = a quinol + NAD(+) + 4 H(+)(out). NDH-1 shuttles electrons from NADH, via FMN and iron-sulfur (Fe-S) centers, to quinones in the respiratory chain. The immediate electron acceptor for the enzyme in this species is believed to be menaquinone. Couples the redox reaction to proton translocation (for every two electrons transferred, four hydrogen ions are translocated across the cytoplasmic membrane), and thus conserves the redox energy in a proton gradient. This subunit may bind ubiquinone. This Mycobacterium avium (strain 104) protein is NADH-quinone oxidoreductase subunit H.